The primary structure comprises 165 residues: Phosphopantetheine adenylyltransferase (165 aa).

S8 lines the substrate pocket. ATP contacts are provided by residues 8 to 9 and H16; that span reads SF. Substrate is bound by residues K40, T72, and R86. Residues 87 to 89, E97, and 122 to 128 each bind ATP; these read GLR and YSFLSSS.

The protein belongs to the bacterial CoaD family. In terms of assembly, homohexamer. Mg(2+) serves as cofactor.

The protein localises to the cytoplasm. It carries out the reaction (R)-4'-phosphopantetheine + ATP + H(+) = 3'-dephospho-CoA + diphosphate. The protein operates within cofactor biosynthesis; coenzyme A biosynthesis; CoA from (R)-pantothenate: step 4/5. Its function is as follows. Reversibly transfers an adenylyl group from ATP to 4'-phosphopantetheine, yielding dephospho-CoA (dPCoA) and pyrophosphate. The polypeptide is Phosphopantetheine adenylyltransferase (Synechococcus sp. (strain WH7803)).